The sequence spans 349 residues: UDP-N-acetylenolpyruvoylglucosamine reductase (349 aa).

In terms of domain architecture, FAD-binding PCMH-type spans 25–197 (GIAATARYAA…VAVTFRLPKR (173 aa)). Arg-173 is a catalytic residue. Catalysis depends on Ser-249, which acts as the Proton donor. The active site involves Glu-345.

Belongs to the MurB family. FAD serves as cofactor.

Its subcellular location is the cytoplasm. The catalysed reaction is UDP-N-acetyl-alpha-D-muramate + NADP(+) = UDP-N-acetyl-3-O-(1-carboxyvinyl)-alpha-D-glucosamine + NADPH + H(+). Its pathway is cell wall biogenesis; peptidoglycan biosynthesis. Its function is as follows. Cell wall formation. This Burkholderia vietnamiensis (strain G4 / LMG 22486) (Burkholderia cepacia (strain R1808)) protein is UDP-N-acetylenolpyruvoylglucosamine reductase.